Here is a 126-residue protein sequence, read N- to C-terminus: Aspartate 1-decarboxylase (126 aa).

The active-site Schiff-base intermediate with substrate; via pyruvic acid is the serine 25. Serine 25 bears the Pyruvic acid (Ser) mark. Threonine 57 serves as a coordination point for substrate. Tyrosine 58 (proton donor) is an active-site residue. Substrate is bound at residue glycine 73 to alanine 75.

This sequence belongs to the PanD family. As to quaternary structure, heterooctamer of four alpha and four beta subunits. Pyruvate serves as cofactor. Post-translationally, is synthesized initially as an inactive proenzyme, which is activated by self-cleavage at a specific serine bond to produce a beta-subunit with a hydroxyl group at its C-terminus and an alpha-subunit with a pyruvoyl group at its N-terminus.

The protein localises to the cytoplasm. It carries out the reaction L-aspartate + H(+) = beta-alanine + CO2. Its pathway is cofactor biosynthesis; (R)-pantothenate biosynthesis; beta-alanine from L-aspartate: step 1/1. Its function is as follows. Catalyzes the pyruvoyl-dependent decarboxylation of aspartate to produce beta-alanine. The protein is Aspartate 1-decarboxylase of Cellvibrio japonicus (strain Ueda107) (Pseudomonas fluorescens subsp. cellulosa).